Here is a 125-residue protein sequence, read N- to C-terminus: Egg cell-secreted protein 1.2 (125 aa).

The signal sequence occupies residues 1–22 (MASNTSFLFATIAILLVLNISG).

This sequence belongs to the plant egg cell-secreted peptide family. In terms of tissue distribution, restricted to female reproductive tissues, specifically accumulating in storage vesicles of the unfertilized egg cell.

The protein resides in the cytoplasmic vesicle. It localises to the secreted. Involved in the regulation of gamete interactions during the double fertilization and to prevent multiple-pollen tube attraction; mediates the redistribution of the gamete fusogen HAP2/GCS1 to the cell surface after secretion upon sperm arrival. In Arabidopsis thaliana (Mouse-ear cress), this protein is Egg cell-secreted protein 1.2 (EC1.2).